A 409-amino-acid chain; its full sequence is Na(+)/H(+) antiporter NhaA (409 aa).

Helical transmembrane passes span 13 to 33, 58 to 78, 93 to 113, 120 to 140, 153 to 173, 176 to 196, 216 to 236, 256 to 276, 279 to 299, 326 to 346, and 363 to 383; these read SGGI…NTFL, LILW…GLEL, IALP…IFYL, FALG…LGIL, IFLM…IALF, SELS…LFAL, VAVL…AFFI, LHGW…AGIS, GVGL…GLFV, FIQL…SLFI, and LAIL…LKFS.

This sequence belongs to the NhaA Na(+)/H(+) (TC 2.A.33) antiporter family.

Its subcellular location is the cell inner membrane. The catalysed reaction is Na(+)(in) + 2 H(+)(out) = Na(+)(out) + 2 H(+)(in). In terms of biological role, na(+)/H(+) antiporter that extrudes sodium in exchange for external protons. The polypeptide is Na(+)/H(+) antiporter NhaA (Campylobacter concisus (strain 13826)).